The sequence spans 257 residues: Mediator of RNA polymerase II transcription subunit 7 (257 aa).

The disordered stretch occupies residues E33–R74. Positions E44–E63 are enriched in basic and acidic residues.

This sequence belongs to the Mediator complex subunit 7 family. In terms of assembly, component of the Mediator complex.

The protein localises to the nucleus. Component of the Mediator complex, a coactivator involved in the regulated transcription of nearly all RNA polymerase II-dependent genes. Mediator functions as a bridge to convey information from gene-specific regulatory proteins to the basal RNA polymerase II transcription machinery. Mediator is recruited to promoters by direct interactions with regulatory proteins and serves as a scaffold for the assembly of a functional preinitiation complex with RNA polymerase II and the general transcription factors. In Scheffersomyces stipitis (strain ATCC 58785 / CBS 6054 / NBRC 10063 / NRRL Y-11545) (Yeast), this protein is Mediator of RNA polymerase II transcription subunit 7 (MED7).